Reading from the N-terminus, the 596-residue chain is Elongation factor 4 (596 aa).

Residues D2–K184 form the tr-type G domain. Residues D14–T19 and N131–D134 contribute to the GTP site.

Belongs to the TRAFAC class translation factor GTPase superfamily. Classic translation factor GTPase family. LepA subfamily.

The protein localises to the cell inner membrane. It carries out the reaction GTP + H2O = GDP + phosphate + H(+). Functionally, required for accurate and efficient protein synthesis under certain stress conditions. May act as a fidelity factor of the translation reaction, by catalyzing a one-codon backward translocation of tRNAs on improperly translocated ribosomes. Back-translocation proceeds from a post-translocation (POST) complex to a pre-translocation (PRE) complex, thus giving elongation factor G a second chance to translocate the tRNAs correctly. Binds to ribosomes in a GTP-dependent manner. This is Elongation factor 4 from Dechloromonas aromatica (strain RCB).